The primary structure comprises 270 residues: Feruloyl esterase C (270 aa).

A signal peptide spans 1–21 (MLRAVLLPTLLAFGAFTPVHG).

It belongs to the faeC family.

The protein localises to the secreted. The catalysed reaction is feruloyl-polysaccharide + H2O = ferulate + polysaccharide.. Involved in degradation of plant cell walls. Hydrolyzes the feruloyl-arabinose ester bond in arabinoxylans, and the feruloyl-galactose ester bond in pectin. Active against paranitrophenyl-acetate, methyl ferulate and wheat arabinoxylan. In Emericella nidulans (strain FGSC A4 / ATCC 38163 / CBS 112.46 / NRRL 194 / M139) (Aspergillus nidulans), this protein is Feruloyl esterase C (faeC).